The primary structure comprises 192 residues: Capsid protein (192 aa).

Residues 1 to 30 (MEDSQPIKVRQPSISAPGTHLSPNPGQQSP) are disordered. The segment covering 12–30 (PSISAPGTHLSPNPGQQSP) has biased composition (polar residues).

The protein belongs to the tymoviruses capsid protein family.

It is found in the virion. In terms of biological role, self-assembles to form a T=3 icosahedral capsid composed of 180 copies of the capsid protein. The capsid encapsulates the single-stranded RNA genome. The polypeptide is Capsid protein (Ononis).